The chain runs to 427 residues: Adenylosuccinate synthetase (427 aa).

Residues 12–18 and 40–42 each bind GTP; these read GDEGKGK and GHT. D13 serves as the catalytic Proton acceptor. Mg(2+)-binding residues include D13 and G40. IMP contacts are provided by residues 13 to 16, 38 to 41, T126, R140, Q221, T236, and R299; these read DEGK and NAGH. H41 acts as the Proton donor in catalysis. 295–301 serves as a coordination point for substrate; the sequence is STTKRPR. GTP is bound by residues R301, 327–329, and 409–411; these read KLD and SVG.

It belongs to the adenylosuccinate synthetase family. As to quaternary structure, homodimer. The cofactor is Mg(2+).

The protein resides in the cytoplasm. It catalyses the reaction IMP + L-aspartate + GTP = N(6)-(1,2-dicarboxyethyl)-AMP + GDP + phosphate + 2 H(+). The protein operates within purine metabolism; AMP biosynthesis via de novo pathway; AMP from IMP: step 1/2. Its function is as follows. Plays an important role in the de novo pathway of purine nucleotide biosynthesis. Catalyzes the first committed step in the biosynthesis of AMP from IMP. This is Adenylosuccinate synthetase from Borrelia duttonii (strain Ly).